Consider the following 101-residue polypeptide: Small ribosomal subunit protein uS14 (101 aa).

Belongs to the universal ribosomal protein uS14 family. Part of the 30S ribosomal subunit. Contacts proteins S3 and S10.

Its function is as follows. Binds 16S rRNA, required for the assembly of 30S particles and may also be responsible for determining the conformation of the 16S rRNA at the A site. The chain is Small ribosomal subunit protein uS14 from Albidiferax ferrireducens (strain ATCC BAA-621 / DSM 15236 / T118) (Rhodoferax ferrireducens).